Consider the following 356-residue polypeptide: S-adenosylmethionine:tRNA ribosyltransferase-isomerase (356 aa).

Belongs to the QueA family. As to quaternary structure, monomer.

It is found in the cytoplasm. The catalysed reaction is 7-aminomethyl-7-carbaguanosine(34) in tRNA + S-adenosyl-L-methionine = epoxyqueuosine(34) in tRNA + adenine + L-methionine + 2 H(+). It participates in tRNA modification; tRNA-queuosine biosynthesis. In terms of biological role, transfers and isomerizes the ribose moiety from AdoMet to the 7-aminomethyl group of 7-deazaguanine (preQ1-tRNA) to give epoxyqueuosine (oQ-tRNA). This is S-adenosylmethionine:tRNA ribosyltransferase-isomerase from Escherichia coli O6:H1 (strain CFT073 / ATCC 700928 / UPEC).